The following is a 165-amino-acid chain: Growth arrest and DNA damage-inducible protein GADD45 alpha (165 aa).

A Phosphothreonine modification is found at Thr-2.

The protein belongs to the GADD45 family. As to quaternary structure, interacts with AURKA, PCNA, GADD45GIP1 and MAPK14.

The protein localises to the nucleus. Might affect PCNA interaction with some CDK (cell division protein kinase) complexes; stimulates DNA excision repair in vitro and inhibits entry of cells into S phase. In T-cells, functions as a regulator of p38 MAPKs by inhibiting p88 phosphorylation and activity. This Felis catus (Cat) protein is Growth arrest and DNA damage-inducible protein GADD45 alpha (GADD45A).